A 769-amino-acid polypeptide reads, in one-letter code: MLSNRAFGETIEDYEVQHLLGKGGFATVYKARCLHTHQDVAIKMIDKKLIQGTGLTNRVRQEVEIHSRLKHPSVLQLYTFFQDANYVYLVLELAHNGELHRYMNHIARPFTETEAASILKQVVAGLLYLHSHNIMHRDISLSNLLLSREMHVKIADFGLATQLKRPDERHMTMCGTPNYISPEVVSRTSHGLPADVWSVGCMLYTLLVGRPPFETDAVQSTLNKVVMSEYIMPAHLSYEAQDLINKLLKKLPHERITLEAVLCHPFMLKCSNGGHSAPGALNVFSQSMESGDSGIITFASSDSRNSQQIRSVENSGPQQVLPQIREEFKQVHHKLPYEQTGLFGQASTGLAEPNWPGAAKSSAFCMEAGNVPNSKQASLKEDRISVPPLNTKRLLPTRYKTKNAIMSILRNGEVVLEFLKFRPTYNEDRINDICRISDDGQRIIIYQPDPGRGLPVREQPPDLQIPSGDCVYNYDNLPSKHWKKYIYGARFVGLVKSKTPKVTYFSTLGKCQLMETMTDFEIRFYSGAKLLKTPSEGLKVYDRNGMLLSDYSCSESRSLIEHGNECFTHCVNISNALEVAQTKDNSCFPVTIGRRPITDVQPAQRLDGLRDTTNIAFSTPKSNQGSINFSLSTISSTRNTSDFGTNCSRSNMLAAHQNIPIKRINVPEIGIATELSHGVVQVQFYDGSVVSVIPSMQGGGITYTQPNGTSTHFGKGDDLPFPVRDRVGQIPNIQLKLKTAPLLGSGRKTDYNNAMTPKTTTPYYNRMLL.

A Protein kinase domain is found at 14–267 (YEVQHLLGKG…LEAVLCHPFM (254 aa)). ATP contacts are provided by residues 20 to 28 (LGKGGFATV) and K43. D138 (proton acceptor) is an active-site residue. The Cryptic POLO box 1 (CPB1) domain maps to 381–498 (EDRISVPPLN…ARFVGLVKSK (118 aa)). The Cryptic POLO box 2 (CPB2) domain occupies 499-602 (TPKVTYFSTL…GRRPITDVQP (104 aa)). The POLO box domain maps to 660-739 (PIKRINVPEI…IPNIQLKLKT (80 aa)).

Belongs to the protein kinase superfamily. Ser/Thr protein kinase family. CDC5/Polo subfamily. Homodimer. Interacts with Alms1a. In terms of processing, ubiquitinated by the SCF-slmb ubiquitin ligase complex; leading to its degradation by the proteasome during interphase and regulating centriole number and ensuring the block to centriole reduplication. In terms of tissue distribution, expressed in testis (at protein level).

It localises to the cytoplasm. The protein resides in the cytoskeleton. Its subcellular location is the microtubule organizing center. The protein localises to the centrosome. It is found in the centriole. The catalysed reaction is L-seryl-[protein] + ATP = O-phospho-L-seryl-[protein] + ADP + H(+). It carries out the reaction L-threonyl-[protein] + ATP = O-phospho-L-threonyl-[protein] + ADP + H(+). Its function is as follows. Serine/threonine-protein kinase that plays a central role in centriole duplication. Able to trigger procentriole formation on the surface of the mother centriole cylinder, using mother centriole as a platform, leading to the recruitment of centriole biogenesis proteins such as Sas-6. When overexpressed, it is able to induce centrosome amplification through the simultaneous generation of multiple procentrioles adjoining each parental centriole during S phase. Centrosome amplification following overexpression can initiate tumorigenesis, highlighting the importance of centrosome regulation in cancers. This chain is Serine/threonine-protein kinase PLK4 (SAK), found in Drosophila melanogaster (Fruit fly).